A 242-amino-acid chain; its full sequence is Segregation and condensation protein A (242 aa).

This sequence belongs to the ScpA family. Component of a cohesin-like complex composed of ScpA, ScpB and the Smc homodimer, in which ScpA and ScpB bind to the head domain of Smc. The presence of the three proteins is required for the association of the complex with DNA.

It is found in the cytoplasm. Its function is as follows. Participates in chromosomal partition during cell division. May act via the formation of a condensin-like complex containing Smc and ScpB that pull DNA away from mid-cell into both cell halves. This Streptococcus pneumoniae serotype 2 (strain D39 / NCTC 7466) protein is Segregation and condensation protein A.